Here is a 414-residue protein sequence, read N- to C-terminus: L-cysteine:1D-myo-inositol 2-amino-2-deoxy-alpha-D-glucopyranoside ligase (414 aa).

C43 contacts Zn(2+). Residues 43-46 (CGIT), T58, and 81-83 (NVT) each bind L-cysteinyl-5'-AMP. The 'HIGH' region signature appears at 45-55 (ITPYDATHLGH). Residues 187-192 (ERGGDP) carry the 'ERGGDP' region motif. L-cysteinyl-5'-AMP is bound at residue W227. C231 provides a ligand contact to Zn(2+). 249 to 251 (GSD) is a binding site for L-cysteinyl-5'-AMP. H256 serves as a coordination point for Zn(2+). I283 contributes to the L-cysteinyl-5'-AMP binding site. Residues 289 to 293 (KMSKS) carry the 'KMSKS' region motif.

Belongs to the class-I aminoacyl-tRNA synthetase family. MshC subfamily. As to quaternary structure, monomer. Requires Zn(2+) as cofactor.

It catalyses the reaction 1D-myo-inositol 2-amino-2-deoxy-alpha-D-glucopyranoside + L-cysteine + ATP = 1D-myo-inositol 2-(L-cysteinylamino)-2-deoxy-alpha-D-glucopyranoside + AMP + diphosphate + H(+). In terms of biological role, catalyzes the ATP-dependent condensation of GlcN-Ins and L-cysteine to form L-Cys-GlcN-Ins. The sequence is that of L-cysteine:1D-myo-inositol 2-amino-2-deoxy-alpha-D-glucopyranoside ligase from Tsukamurella paurometabola (strain ATCC 8368 / DSM 20162 / CCUG 35730 / CIP 100753 / JCM 10117 / KCTC 9821 / NBRC 16120 / NCIMB 702349 / NCTC 13040) (Corynebacterium paurometabolum).